A 97-amino-acid chain; its full sequence is Osteocalcin (97 aa).

The N-terminal stretch at 1–18 (MKTLAFLVLCSLAAICLT) is a signal peptide. A propeptide spanning residues 19–52 (SDASTGSQPASDNPADEGMFVERDQASAVVRQKR) is cleaved from the precursor. The 41-residue stretch at 53 to 93 (AAGQLSLTQLESLREVCELNLACEHMMDTEGIIAAYTAYYG) folds into the Gla domain. Ca(2+) is bound by residues Glu63, Glu67, Glu70, and Glu76. Glu63, Glu67, and Glu70 each carry 4-carboxyglutamate. Cys69 and Cys75 form a disulfide bridge.

The protein belongs to the osteocalcin/matrix Gla protein family. In terms of processing, gamma-carboxyglutamate residues are formed by vitamin K dependent carboxylation by GGCX. These residues are essential for the binding of calcium.

Its subcellular location is the secreted. In terms of biological role, the carboxylated form is one of the main organic components of the bone matrix, which constitutes 1-2% of the total bone protein. The carboxylated form binds strongly to apatite and calcium. The chain is Osteocalcin (bglap) from Sparus aurata (Gilthead sea bream).